The primary structure comprises 614 residues: MTDVSAPVFDGKAFAAQLSTAPGVYRMYAADDTLLYVGKARALRNRVGSYFNGSPKNARIMSMISQITRMDVTVTRSEAEALLLENQLIKSLSPRYNVSLRDDKTYPHVLLTREDWPRIALHRGPRAIPGRYFGPYPGVTAVRETLNLMHKLFKLRSCEDSVFRNRSRPCLQYQIGRCSAPCVELVPAPEYAESVRRAALFLEGKSDELTRELGEQMQAASEALEFEQAARLRDLISSLRSMQTRQYVDGRAADLDVLAVAMQGSQACVLLLAFRDGRNLGTRPFFPRTNGEESPEEVLAAFVSQYYIEFEPPREILLDREIPDADLLVAALSASAERKVQLKWNVRGERAGYVELASRNAQLTLATELNSRNAQHARSDALRDMLGLAEPVKRVECFDISHTLGEATVASCVVFDAAGPVRAQYRRFNISGIEPGDDYAAMRQAIDRRFRRAVEEQGVLPDVLLIDGGAGQLAQAQAALADLGVEGVLLVGVAKGVERRAGHEALVMPDGRELRPGAANPALQFIQQVRDEAHRFAITGHRGRRQKARMTSKLEDIPGIGPRRRASLLKHFGGLVGLKAAGEAEIAKVEGINDALAARIYANLHGLATPDAAE.

Residues threonine 20–valine 98 enclose the GIY-YIG domain. The UVR domain occupies aspartate 207–methionine 242.

It belongs to the UvrC family. Interacts with UvrB in an incision complex.

The protein resides in the cytoplasm. The UvrABC repair system catalyzes the recognition and processing of DNA lesions. UvrC both incises the 5' and 3' sides of the lesion. The N-terminal half is responsible for the 3' incision and the C-terminal half is responsible for the 5' incision. This chain is UvrABC system protein C, found in Stenotrophomonas maltophilia (strain R551-3).